Reading from the N-terminus, the 451-residue chain is Phosphoglucosamine mutase (451 aa).

S102 (phosphoserine intermediate) is an active-site residue. S102, D243, D245, and D247 together coordinate Mg(2+). Residue S102 is modified to Phosphoserine.

This sequence belongs to the phosphohexose mutase family. It depends on Mg(2+) as a cofactor. In terms of processing, activated by phosphorylation.

The enzyme catalyses alpha-D-glucosamine 1-phosphate = D-glucosamine 6-phosphate. In terms of biological role, catalyzes the conversion of glucosamine-6-phosphate to glucosamine-1-phosphate. This is Phosphoglucosamine mutase from Paramagnetospirillum magneticum (strain ATCC 700264 / AMB-1) (Magnetospirillum magneticum).